We begin with the raw amino-acid sequence, 196 residues long: Spore maturation protein A (196 aa).

4 consecutive transmembrane segments (helical) span residues 1-21 (MVNI…MCNG), 37-57 (AITI…LMKI), 133-153 (ITFL…VIAV), and 163-183 (TDIV…AIII).

It is found in the cell membrane. In terms of biological role, involved in spore core dehydration; might be involved in the transport of something into or out of the forespore or could be required for some modification of the cortex peptidoglycan structure. In Bacillus subtilis (strain 168), this protein is Spore maturation protein A (spmA).